We begin with the raw amino-acid sequence, 140 residues long: Sex-regulated protein janus-B (140 aa).

Arginine 42 serves as a coordination point for substrate. Catalysis depends on histidine 69, which acts as the Proton acceptor. 110–112 is a binding site for substrate; that stretch reads SRT.

Belongs to the janus family.

Its function is as follows. JanA and janB regulate somatic sex differentiation. The polypeptide is Sex-regulated protein janus-B (janB) (Drosophila orena (Fruit fly)).